Here is a 221-residue protein sequence, read N- to C-terminus: Holliday junction branch migration complex subunit RuvA (221 aa).

The domain I stretch occupies residues 1-61; sequence MQIYQFGKIV…DYTKITYGFA (61 aa). The domain II stretch occupies residues 62 to 139; the sequence is SFRERILFED…RFNENHKNQT (78 aa). The tract at residues 133 to 155 is disordered; it reads ENHKNQTEETNQDSQEKELEKKD. The segment at 140–166 is flexible linker; it reads EETNQDSQEKELEKKDDLADITIQKSN. Residues 146–155 are compositionally biased toward basic and acidic residues; that stretch reads SQEKELEKKD. The domain III stretch occupies residues 167–221; sequence LEDKTAANLEDTLKMLGFKPRQIDYALTKVEPNENFENLIENAIKIISNAREFRN.

Belongs to the RuvA family. As to quaternary structure, homotetramer. Forms an RuvA(8)-RuvB(12)-Holliday junction (HJ) complex. HJ DNA is sandwiched between 2 RuvA tetramers; dsDNA enters through RuvA and exits via RuvB. An RuvB hexamer assembles on each DNA strand where it exits the tetramer. Each RuvB hexamer is contacted by two RuvA subunits (via domain III) on 2 adjacent RuvB subunits; this complex drives branch migration. In the full resolvosome a probable DNA-RuvA(4)-RuvB(12)-RuvC(2) complex forms which resolves the HJ.

It is found in the cytoplasm. Functionally, the RuvA-RuvB-RuvC complex processes Holliday junction (HJ) DNA during genetic recombination and DNA repair, while the RuvA-RuvB complex plays an important role in the rescue of blocked DNA replication forks via replication fork reversal (RFR). RuvA specifically binds to HJ cruciform DNA, conferring on it an open structure. The RuvB hexamer acts as an ATP-dependent pump, pulling dsDNA into and through the RuvAB complex. HJ branch migration allows RuvC to scan DNA until it finds its consensus sequence, where it cleaves and resolves the cruciform DNA. The polypeptide is Holliday junction branch migration complex subunit RuvA (Mesomycoplasma hyopneumoniae (strain J / ATCC 25934 / NCTC 10110) (Mycoplasma hyopneumoniae)).